A 284-amino-acid polypeptide reads, in one-letter code: Tropomyosin Per a 7.0102 (284 aa).

A coiled-coil region spans residues 1-266 (MDAIKKKMQA…EDELVHEKEK (266 aa)).

Belongs to the tropomyosin family. Homodimer. As to expression, expressed in striated skeletal muscle (at protein level).

Tropomyosin, in association with the troponin complex, plays a central role in the calcium dependent regulation of muscle contraction. This is Tropomyosin Per a 7.0102 from Periplaneta americana (American cockroach).